A 248-amino-acid polypeptide reads, in one-letter code: UDP-2,3-diacylglucosamine hydrolase (248 aa).

Residues Asp-7, His-9, Asp-40, Asn-78, and His-113 each coordinate Mn(2+). 78–79 (NR) serves as a coordination point for substrate. The substrate site is built by Asp-121, Ser-159, Thr-163, Lys-166, and His-194. The Mn(2+) site is built by His-194 and His-196.

This sequence belongs to the LpxH family. Mn(2+) serves as cofactor.

The protein localises to the cell inner membrane. The catalysed reaction is UDP-2-N,3-O-bis[(3R)-3-hydroxytetradecanoyl]-alpha-D-glucosamine + H2O = 2-N,3-O-bis[(3R)-3-hydroxytetradecanoyl]-alpha-D-glucosaminyl 1-phosphate + UMP + 2 H(+). The protein operates within glycolipid biosynthesis; lipid IV(A) biosynthesis; lipid IV(A) from (3R)-3-hydroxytetradecanoyl-[acyl-carrier-protein] and UDP-N-acetyl-alpha-D-glucosamine: step 4/6. Its function is as follows. Hydrolyzes the pyrophosphate bond of UDP-2,3-diacylglucosamine to yield 2,3-diacylglucosamine 1-phosphate (lipid X) and UMP by catalyzing the attack of water at the alpha-P atom. Involved in the biosynthesis of lipid A, a phosphorylated glycolipid that anchors the lipopolysaccharide to the outer membrane of the cell. This is UDP-2,3-diacylglucosamine hydrolase from Pseudomonas fluorescens (strain Pf0-1).